The chain runs to 384 residues: S-adenosylmethionine synthase (384 aa).

H15 serves as a coordination point for ATP. Residue D17 participates in Mg(2+) binding. E43 contacts K(+). Residues E56 and Q99 each coordinate L-methionine. The segment at 99–109 (QSPDINQGVDR) is flexible loop. ATP contacts are provided by residues 164 to 166 (DAK), 230 to 231 (RF), D239, 245 to 246 (RK), A262, and K266. Residue D239 participates in L-methionine binding. Position 270 (K270) interacts with L-methionine.

Belongs to the AdoMet synthase family. As to quaternary structure, homotetramer; dimer of dimers. Requires Mg(2+) as cofactor. K(+) serves as cofactor.

The protein localises to the cytoplasm. The catalysed reaction is L-methionine + ATP + H2O = S-adenosyl-L-methionine + phosphate + diphosphate. Its pathway is amino-acid biosynthesis; S-adenosyl-L-methionine biosynthesis; S-adenosyl-L-methionine from L-methionine: step 1/1. In terms of biological role, catalyzes the formation of S-adenosylmethionine (AdoMet) from methionine and ATP. The overall synthetic reaction is composed of two sequential steps, AdoMet formation and the subsequent tripolyphosphate hydrolysis which occurs prior to release of AdoMet from the enzyme. This chain is S-adenosylmethionine synthase, found in Shigella boydii serotype 18 (strain CDC 3083-94 / BS512).